A 488-amino-acid polypeptide reads, in one-letter code: Ribulose bisphosphate carboxylase large chain (488 aa).

Substrate contacts are provided by Asn127 and Thr177. Lys179 functions as the Proton acceptor in the catalytic mechanism. Lys181 contacts substrate. The Mg(2+) site is built by Lys205, Asp207, and Glu208. Residue Lys205 is modified to N6-carboxylysine. His297 serves as the catalytic Proton acceptor. Residues Arg298, His330, and Ser382 each contribute to the substrate site.

This sequence belongs to the RuBisCO large chain family. Type I subfamily. Heterohexadecamer of 8 large chains and 8 small chains. Mg(2+) is required as a cofactor.

Its subcellular location is the plastid. It localises to the chloroplast. The catalysed reaction is 2 (2R)-3-phosphoglycerate + 2 H(+) = D-ribulose 1,5-bisphosphate + CO2 + H2O. The enzyme catalyses D-ribulose 1,5-bisphosphate + O2 = 2-phosphoglycolate + (2R)-3-phosphoglycerate + 2 H(+). RuBisCO catalyzes two reactions: the carboxylation of D-ribulose 1,5-bisphosphate, the primary event in carbon dioxide fixation, as well as the oxidative fragmentation of the pentose substrate in the photorespiration process. Both reactions occur simultaneously and in competition at the same active site. This is Ribulose bisphosphate carboxylase large chain (rbcL) from Pyropia haitanensis (Red seaweed).